The chain runs to 389 residues: Growth/differentiation factor 2 (389 aa).

Positions 1 to 20 (MWRVGHLLLLMSIVFRITEE) are cleaved as a signal peptide. Residues 21-280 (KSLGDAGSLE…PVSNRHRRRK (260 aa)) constitute a propeptide that is removed on maturation. Asn-65, Asn-118, Asn-127, and Asn-232 each carry an N-linked (GlcNAc...) asparagine glycan. The span at 263 to 272 (QQQVGNQAPV) shows a compositional bias: polar residues. Positions 263-284 (QQQVGNQAPVSNRHRRRKRKAK) are disordered. The segment covering 274 to 284 (NRHRRRKRKAK) has biased composition (basic residues). Cystine bridges form between Cys-288–Cys-354, Cys-317–Cys-386, and Cys-321–Cys-388. N-linked (GlcNAc...) asparagine glycosylation occurs at Asn-342.

It belongs to the TGF-beta family. In terms of assembly, homodimer; disulfide-linked. Post-translationally, a reversible disulfide bond can be formed between the two subunits in the homodimer; this has no effect on gdf2 activity.

It is found in the secreted. Potent circulating inhibitor of angiogenesis. Signals through the type I activin receptor ACVRL1 but not other Alks. Signaling through SMAD1 in endothelial cells requires TGF-beta coreceptor endoglin/eng. The sequence is that of Growth/differentiation factor 2 (gdf2) from Danio rerio (Zebrafish).